A 463-amino-acid chain; its full sequence is MLPARVRLLTPHLLLVLVQLSPAGGHRTTGPRFLISDRDPPCNPHCPRTQPKPICASDGRSYESMCEYQRAKCRDPALAVVHRGRCKDAGQSKCRLERAQALEQAKKPQEAVFVPECGEDGSFTQVQCHTYTGYCWCVTPDGKPISGSSVQNKTPVCSGPVTDKPLSQGNSGRKVSFRFFLTLNSDDGSKPTPTMETQPVFDGDEITAPTLWIKHLVIKDSKLNNTNVRNSEKVHSCDQERQSALEEARQNPREGIVIPECAPGGLYKPVQCHQSTGYCWCVLVDTGRPLPGTSTRYVMPSCESDARAKSVEADDPFKDRELPGCPEGKKMEFITSLLDALTTDMVQAINSAAPTGGGRFSEPDPSHTLEERVAHWYFSQLDSNSSDDINKREMKPFKRYVKKKAKPKKCARRFTDYCDLNKDKVISLPELKGCLGVSKEGGSLGSFPQGKRAGTNPFIGRLV.

Residues 1–25 (MLPARVRLLTPHLLLVLVQLSPAGG) form the signal peptide. The Kazal-like domain occupies 36–88 (SDRDPPCNPHCPRTQPKPICASDGRSYESMCEYQRAKCRDPALAVVHRGRCKD). Cystine bridges form between cysteine 42/cysteine 73, cysteine 46/cysteine 66, cysteine 55/cysteine 86, cysteine 94/cysteine 117, cysteine 128/cysteine 135, and cysteine 137/cysteine 157. The region spanning 91–157 (QSKCRLERAQ…SSVQNKTPVC (67 aa)) is the Thyroglobulin type-1 1 domain. N-linked (GlcNAc...) asparagine glycosylation occurs at asparagine 224. One can recognise a Thyroglobulin type-1 2 domain in the interval 234–302 (VHSCDQERQS…TSTRYVMPSC (69 aa)). 3 disulfides stabilise this stretch: cysteine 237–cysteine 261, cysteine 272–cysteine 279, and cysteine 281–cysteine 302. EF-hand domains follow at residues 369–404 (LEERVAHWYFSQLDSNSSDDINKREMKPFKRYVKKK) and 406–441 (KPKKCARRFTDYCDLNKDKVISLPELKGCLGVSKEG). 9 residues coordinate Ca(2+): aspartate 382, asparagine 384, serine 386, aspartate 388, glutamate 393, aspartate 419, asparagine 421, aspartate 423, and glutamate 430. The N-linked (GlcNAc...) asparagine glycan is linked to asparagine 384.

Glycosylated. In terms of tissue distribution, widely expressed in many tissues with a strongest signal in ovary.

The protein localises to the secreted. It is found in the extracellular space. Its subcellular location is the extracellular matrix. It localises to the basement membrane. In terms of biological role, probable regulator of osteoblast differentiation. Plays essential roles in both eye and limb development. The polypeptide is SPARC-related modular calcium-binding protein 1 (Smoc1) (Mus musculus (Mouse)).